The following is a 390-amino-acid chain: MTVKLMKDQDLAGKRVLIREDLNVPLDGGRITSTVRIDAAIPTLKAALEAGAKVAVMSHLGRPDEGVYDAAASLAPVAKYLSEKLGREVPLVQDWIDGYSADADLVLLENVRFNKGEGKNDDALAQKMAALCDVFVMDAFGTAHRAQASTHGVAKFAPIACAGPLLAAELDALGKVLDKPARPLVAIVGGSKVSTKLSVLDAVSKIADVLVVGGGISNTFVASAGNEVGNSLYEKDLIPEAQRLRAQTEVVFATDVRVTKEGFKEWSHNSVAVAKKASEIQADEEIVDYGPETAARVAEIIKNAKTVLWNGPCGVFEFDAFAQGTEVVARAIAESEAFSIAGGGDTLAAIDKWNLADKISYVSTGGGAFLEFVEGKKLPAVAILEERAKA.

Residues 21-23 (DLN), Arg-36, 59-62 (HLGR), Arg-112, and Arg-145 each bind substrate. Residues Lys-196, Glu-317, and 343 to 346 (GGDT) contribute to the ATP site.

Belongs to the phosphoglycerate kinase family. As to quaternary structure, monomer.

It localises to the cytoplasm. It catalyses the reaction (2R)-3-phosphoglycerate + ATP = (2R)-3-phospho-glyceroyl phosphate + ADP. Its pathway is carbohydrate degradation; glycolysis; pyruvate from D-glyceraldehyde 3-phosphate: step 2/5. The sequence is that of Phosphoglycerate kinase from Cellvibrio japonicus (strain Ueda107) (Pseudomonas fluorescens subsp. cellulosa).